The chain runs to 429 residues: Putative pentatricopeptide repeat-containing protein At1g03510 (429 aa).

PPR repeat units follow at residues 11-45 (KLISLTKQLSSYANQGNHEQALNLFLQMHSSFALP), 47-81 (DAHVFSLALKSCAAAFRPVLGGSVHAHSVKSNFLS), 82-112 (NPFVGCALLDMYGKCLSVSHARKLFDEIPQR), 113-147 (NAVVWNAMISHYTHCGKVKEAVELYEAMDVMPNES), 148-180 (SFNAIIKGLVGTEDGSYRAIEFYRKMIEFRFKP), 181-215 (NLITLLALVSACSAIGAFRLIKEIHSYAFRNLIEP), 216-246 (HPQLKSGLVEAYGRCGSIVYVQLVFDSMEDR), 247-281 (DVVAWSSLISAYALHGDAESALKTFQEMELAKVTP), 282-312 (DDIAFLNVLKACSHAGLADEALVYFKRMQGD), and 318-348 (SKDHYSCLVDVLSRVGRFEEAYKVIQAMPEK). A type E motif region spans residues 353-428 (TWGALLGACR…SPGSSWCLFK (76 aa)).

This sequence belongs to the PPR family. PCMP-E subfamily.

This is Putative pentatricopeptide repeat-containing protein At1g03510 (PCMP-E3) from Arabidopsis thaliana (Mouse-ear cress).